The sequence spans 438 residues: MLATLARVAALRRTCLFSGRGGGRGLWTGRPQSDMNNIKPLEGVKILDLTRVLAGPFATMNLGDLGAEVIKVERPGAGDDTRTWGPPFVGTESTYYLSVNRNKKSIAVNIKDPKGVKIIKELAAVCDVFVENYVPGKLSAMGLGYEDIDEIAPHIIYCSITGYGQTGPISQRAGYDAVASAVSGLMHITGPENGDPVRPGVAMTDLATGLYAYGAIMAGLIQKYKTGKGLFIDCNLLSSQVACLSHIAANYLIGQKEAKRWGTAHGSIVPYQAFKTKDGYIVVGAGNNQQFATVCKILDLPELIDNSKYKTNHLRVHNRKELIKILSERFEEELTSKWLYLFEGSGVPYGPINNMKNVFAEPQVLHNGLVMEMEHPTVGKISVPGPAVRYSKFKMSEARPPPLLGQHTTHILKEVLRYDDRAIGELLSAGVVDQHETH.

The N-terminal 31 residues, 1–31 (MLATLARVAALRRTCLFSGRGGGRGLWTGRP), are a transit peptide targeting the mitochondrion. D205 (nucleophile) is an active-site residue. An N6-acetyllysine modification is found at K394.

Belongs to the CoA-transferase III family. Highly expressed in kidney. Intermediate expression in liver, skeletal muscle and pancreas. Little to no expression detected in other tissues examined.

The protein localises to the mitochondrion. It catalyses the reaction glutarate + succinyl-CoA = glutaryl-CoA + succinate. The catalysed reaction is 3-hydroxy-3-methylglutarate + succinyl-CoA = (3S)-3-hydroxy-3-methylglutaryl-CoA + succinate. It carries out the reaction 3-hydroxy-3-methylglutarate + glutaryl-CoA = (3S)-3-hydroxy-3-methylglutaryl-CoA + glutarate. The enzyme catalyses hexanedioate + glutaryl-CoA = hexanedioyl-CoA + glutarate. It catalyses the reaction itaconate + glutaryl-CoA = itaconyl-CoA + glutarate. The catalysed reaction is itaconate + succinyl-CoA = itaconyl-CoA + succinate. Inhibited by valsartan and losartan carboxylate. In terms of biological role, coenzyme A (CoA) transferase that reversibly catalyzes the transfer of a CoA moiety from a dicarboxyl-CoA to a dicarboxylate in a metabolite recycling process. Displays preference for succinyl-CoA and glutarate-CoA as dicarboxyl-CoA donors and glutarate, succinate, adipate/hexanedioate, itaconate and 3-hydroxy-3-methylglutarate as dicarboxylate acceptors. Acts on intermediates or end products of lysine and tryptophan degradation pathway, in particular catalyzes succinyl-CoA-dependent reesterification of free glutarate into glutaryl-CoA to prevent renal excretion of glutarate. Upon inflammation, may convert macrophage-derived itaconate to itaconyl-CoA in erythroid precursors where it negatively regulates the TCA cycle and heme synthesis to limit erythroid differentiation in the context of stress erythropoiesis. This is Succinyl-CoA:glutarate CoA-transferase from Homo sapiens (Human).